The chain runs to 3903 residues: Centrin-binding protein SFI1 (3903 aa).

Residues N159 and N1728 are each glycosylated (N-linked (GlcNAc...) asparagine).

In terms of assembly, interacts with CEN1.

It is found in the cytoplasm. It localises to the cytoskeleton. The protein resides in the microtubule organizing center. Its subcellular location is the centrosome. Functionally, part of the centrosome outer core complex. Plays a role in the initiation and assembly of daughter buds. The polypeptide is Centrin-binding protein SFI1 (Toxoplasma gondii (strain ATCC 50611 / Me49)).